Reading from the N-terminus, the 591-residue chain is Paxillin (591 aa).

An N-acetylmethionine modification is found at M1. The LD motif 1 signature appears at D3 to T15. The tract at residues H17–L138 is disordered. The residue at position 31 (Y31) is a Phosphotyrosine; by PTK6. Positions V45–S54 are enriched in pro residues. Polar residues predominate over residues W69–Q101. 2 positions are modified to phosphoserine: S83 and S85. At Y88 the chain carries Phosphotyrosine. The residue at position 106 (S106) is a Phosphoserine. A Phosphotyrosine; by PTK6 modification is found at Y118. Phosphoserine is present on residues S119, S126, and S130. Residues P121 to S137 show a composition bias toward polar residues. T132 bears the Phosphothreonine mark. Residues S137, S140, and S143 each carry the phosphoserine modification. Positions E144–Q156 match the LD motif 2 motif. The disordered stretch occupies residues Q156–V213. Y181 is subject to Phosphotyrosine. An LD motif 3 motif is present at residues S216–V228. The residue at position 230 (S230) is a Phosphoserine. Positions V237 to S260 are disordered. Residue S244 is modified to Phosphoserine; by CDK5. S250, S258, S261, and S272 each carry phosphoserine. An LD motif 4 motif is present at residues E265 to F276. A compositionally biased stretch (basic and acidic residues) spans R289–G300. The tract at residues R289–D335 is disordered. S303, S322, S332, and S340 each carry phosphoserine. The LD motif 5 signature appears at Q333 to L345. LIM zinc-binding domains lie at G356 to P415, R416 to A473, P474 to S533, and L534 to C591. At S533 the chain carries Phosphoserine.

Belongs to the paxillin family. Binds to vinculin and to the SH3 domain of SRC. Interacts with GIT1, NUDT16L1/SDOS, PARVA, PARVB, SORBS1 and TGFB1I1. Component of cytoplasmic complexes, which also contain GIT1, ARHGEF6 and PAK1. Binds ASAP2. Interacts with RNF5 and PDCD10. Interacts with NEK3 and this interaction is prolactin-dependent. Interacts with PTK2/FAK1 and PTK2B/PYK2. Interacts with PTK6. Interacts with CD36. Interacts (via cytoplasmic domain) with CEACAM1; the interaction is phosphotyrosyl-dependent. Interacts with PXN; this complex stabilizes actin dynamics. Interacts with TRIM15. Interacts with PAK4; PAK4 acts as a scaffold to suppport PAXI phosphorylation at Ser-272. In terms of processing, phosphorylated by MAPK1/ERK2. Phosphorylated on tyrosine residues during integrin-mediated cell adhesion, embryonic development, fibroblast transformation and following stimulation of cells by mitogens. Phosphorylation at Ser-244 by CDK5 reduces its interaction with PTK2/FAK1 in matrix-cell focal adhesions (MCFA) during oligodendrocytes (OLs) differentiation. Phosphorylation at Tyr-31 and Tyr-118 by PTK6 promote the activation of RAC1 via CRK/CrKII, thereby promoting migration and invasion. Phosphorylation at Ser-250 by SLK is required for PXN redistribution and cell motility. Phosphorylation at Ser-272 promotes focal adhesion disassembly during cell migration.

It is found in the cytoplasm. The protein resides in the cytoskeleton. The protein localises to the cell junction. It localises to the focal adhesion. Its subcellular location is the cell cortex. Cytoskeletal protein involved in actin-membrane attachment at sites of cell adhesion to the extracellular matrix (focal adhesion). Recruits other proteins such as TRIM15 to focal adhesion. This is Paxillin (PXN) from Pongo abelii (Sumatran orangutan).